The primary structure comprises 216 residues: HTH-type transcriptional regulator EthR (216 aa).

Positions 1-10 are enriched in polar residues; sequence MTTSAASQAS. A disordered region spans residues 1 to 24; that stretch reads MTTSAASQASLPRGRRTARPSGDD. Residues 23–83 enclose the HTH tetR-type domain; that stretch reads DDRELAILAT…TLLDRVVNQA (61 aa). Positions 46 to 65 form a DNA-binding region, H-T-H motif; it reads SVDDLAKGAGISRPTFYFYF.

In terms of assembly, homodimer.

Involved in the repression of the monooxygenase EthA which is responsible of the formation of the active metabolite of ethionamide (ETH). This chain is HTH-type transcriptional regulator EthR (ethR), found in Mycobacterium bovis (strain ATCC BAA-935 / AF2122/97).